Consider the following 773-residue polypeptide: Serine/threonine-protein kinase CBK1 (773 aa).

Composition is skewed to polar residues over residues 50 to 59 (LHDQYSSHME) and 178 to 217 (GNYNINGSQSSSPYHQPQTFYTNSNLSSGQLSAHRSSPQR). 2 disordered regions span residues 50–111 (LHDQ…GGNI) and 177–275 (NGNY…QQQQ). 2 stretches are compositionally biased toward low complexity: residues 218–256 (QPAQPLQQTTFTQLPQPSLPPQQQQQQQQQQQQQQQQQP) and 265–275 (QQTQLQQQQQQ). Positions 370–686 (FHTVQVIGKG…ADEIKSHPFF (317 aa)) constitute a Protein kinase domain. ATP is bound by residues 376–384 (IGKGAFGEV) and lysine 399. Catalysis depends on aspartate 493, which acts as the Proton acceptor. Residues 687-771 (RGVDWNTIRQ…SRFDYLTRKN (85 aa)) form the AGC-kinase C-terminal domain.

This sequence belongs to the protein kinase superfamily. STE Ser/Thr protein kinase family. COT1 subfamily.

It carries out the reaction L-seryl-[protein] + ATP = O-phospho-L-seryl-[protein] + ADP + H(+). The catalysed reaction is L-threonyl-[protein] + ATP = O-phospho-L-threonyl-[protein] + ADP + H(+). Protein kinase that seems to play a role in the regulation of cell morphogenesis and proliferation. In Candida glabrata (strain ATCC 2001 / BCRC 20586 / JCM 3761 / NBRC 0622 / NRRL Y-65 / CBS 138) (Yeast), this protein is Serine/threonine-protein kinase CBK1 (CBK1).